Here is a 269-residue protein sequence, read N- to C-terminus: Formamidopyrimidine-DNA glycosylase (269 aa).

Residue Pro-2 is the Schiff-base intermediate with DNA of the active site. Residue Glu-3 is the Proton donor of the active site. The active-site Proton donor; for beta-elimination activity is Lys-57. The DNA site is built by His-90, Arg-109, and Lys-150. The segment at 235–269 (QVYGRAGEPCRACGTPIESAKHGQRSTFFCPRCQR) adopts an FPG-type zinc-finger fold. Catalysis depends on Arg-259, which acts as the Proton donor; for delta-elimination activity.

It belongs to the FPG family. Monomer. Zn(2+) is required as a cofactor.

The enzyme catalyses Hydrolysis of DNA containing ring-opened 7-methylguanine residues, releasing 2,6-diamino-4-hydroxy-5-(N-methyl)formamidopyrimidine.. It carries out the reaction 2'-deoxyribonucleotide-(2'-deoxyribose 5'-phosphate)-2'-deoxyribonucleotide-DNA = a 3'-end 2'-deoxyribonucleotide-(2,3-dehydro-2,3-deoxyribose 5'-phosphate)-DNA + a 5'-end 5'-phospho-2'-deoxyribonucleoside-DNA + H(+). Functionally, involved in base excision repair of DNA damaged by oxidation or by mutagenic agents. Acts as a DNA glycosylase that recognizes and removes damaged bases. Has a preference for oxidized purines, such as 7,8-dihydro-8-oxoguanine (8-oxoG). Has AP (apurinic/apyrimidinic) lyase activity and introduces nicks in the DNA strand. Cleaves the DNA backbone by beta-delta elimination to generate a single-strand break at the site of the removed base with both 3'- and 5'-phosphates. The protein is Formamidopyrimidine-DNA glycosylase of Serratia proteamaculans (strain 568).